Here is a 109-residue protein sequence, read N- to C-terminus: Large ribosomal subunit protein uL22 (109 aa).

This sequence belongs to the universal ribosomal protein uL22 family. In terms of assembly, part of the 50S ribosomal subunit.

Its function is as follows. This protein binds specifically to 23S rRNA; its binding is stimulated by other ribosomal proteins, e.g. L4, L17, and L20. It is important during the early stages of 50S assembly. It makes multiple contacts with different domains of the 23S rRNA in the assembled 50S subunit and ribosome. The globular domain of the protein is located near the polypeptide exit tunnel on the outside of the subunit, while an extended beta-hairpin is found that lines the wall of the exit tunnel in the center of the 70S ribosome. The chain is Large ribosomal subunit protein uL22 from Chromobacterium violaceum (strain ATCC 12472 / DSM 30191 / JCM 1249 / CCUG 213 / NBRC 12614 / NCIMB 9131 / NCTC 9757 / MK).